Consider the following 377-residue polypeptide: uncharacterized protein (377 aa).

An ATP-binding site is contributed by 32–39 (GPINSGKT).

The protein belongs to the archaeal ATPase family.

This is an uncharacterized protein from Methanocaldococcus jannaschii (strain ATCC 43067 / DSM 2661 / JAL-1 / JCM 10045 / NBRC 100440) (Methanococcus jannaschii).